The chain runs to 437 residues: uncharacterized protein (437 aa).

Basic residues-rich tracts occupy residues 1 to 29 (MDTP…RHRN), 81 to 91 (LRGRHPRVRRV), and 101 to 118 (RRRH…GRNR). Disordered regions lie at residues 1–31 (MDTP…RNDH) and 77–437 (EHVP…QGTR). Residues 119–132 (HAGDRRAPGVDSRL) are compositionally biased toward basic and acidic residues. The segment covering 133-142 (RQQHQHPRGR) has biased composition (basic residues). The segment covering 143–164 (HASDRVQDGAHPRRQRLREQPR) has biased composition (basic and acidic residues). The segment covering 165–190 (HAGRPRRRQPPRRGRSRGTHRRHLRQ) has biased composition (basic residues). Composition is skewed to basic and acidic residues over residues 198–209 (GPDEDQAREFRG) and 217–253 (HPPT…EAGR). 2 stretches are compositionally biased toward basic residues: residues 284–293 (TVHRGGRLRG) and 324–348 (PHSR…RVRH). The span at 371-382 (DAAAYASVPAHA) shows a compositional bias: low complexity.

This is an uncharacterized protein from Haloferax lucentense (strain DSM 14919 / JCM 9276 / NCIMB 13854 / Aa 2.2) (Haloferax alicantei).